Here is a 51-residue protein sequence, read N- to C-terminus: Large ribosomal subunit protein bL33 (51 aa).

Residues 1–23 (MREKIKLESSAGTGHFYTTTKNK) form a disordered region. Residues 10-20 (SAGTGHFYTTT) are compositionally biased toward polar residues.

The protein belongs to the bacterial ribosomal protein bL33 family.

The protein is Large ribosomal subunit protein bL33 of Nitrosomonas eutropha (strain DSM 101675 / C91 / Nm57).